Here is a 274-residue protein sequence, read N- to C-terminus: UPF0758 protein RHECIAT_CH0001935 (274 aa).

The tract at residues 1–57 is disordered; it reads MAKRPAATSSNDELPFATEEPVADERSFFGGRPQNPTAPNARAALPASLSGPEHYHG. An MPN domain is found at 152–274; that stretch reads VLSSWSSVIQ…HVSLKGLKLI (123 aa). Zn(2+) is bound by residues histidine 223, histidine 225, and aspartate 236. Positions 223–236 match the JAMM motif motif; the sequence is HNHPSGDPTPSRAD.

The protein belongs to the UPF0758 family.

The sequence is that of UPF0758 protein RHECIAT_CH0001935 from Rhizobium etli (strain CIAT 652).